A 461-amino-acid polypeptide reads, in one-letter code: Transforming growth factor beta-1-induced transcript 1 protein (461 aa).

N-acetylmethionine is present on M1. Positions 1–87 are disordered; it reads MEDLDALLSD…PFSSSSGVLG (87 aa). Residues 1–200 form a transcription activation region; that stretch reads MEDLDALLSD…GSPSPPEPTG (200 aa). Positions 1–240 are interaction with PTK2B/PYK2; sequence MEDLDALLSD…CNKPIAGQVV (240 aa). An LD motif 1 motif is present at residues 3–15; the sequence is DLDALLSDLETTT. At T33 the chain carries Phosphothreonine. Y38 is subject to Phosphotyrosine. The segment covering 40–52 has biased composition (polar residues); that stretch reads HQPQTGSGESSGA. The residue at position 60 (Y60) is a Phosphotyrosine; by FAK2 and FYN. A Phosphoserine modification is found at S68. The interval 83–136 is interaction with PTK2/FAK1; it reads SGVLGTGLCELDRLLQELNATQFNITDEIMSQFPSSKVASGEQKEDQSEDKKRP. Positions 92–104 match the LD motif 2 motif; that stretch reads ELDRLLQELNATQ. The disordered stretch occupies residues 116–152; sequence PSSKVASGEQKEDQSEDKKRPSLPSSPSPGLPKASAT. A compositionally biased stretch (basic and acidic residues) spans 124-135; sequence EQKEDQSEDKKR. S137, S140, S141, S143, S164, and S186 each carry phosphoserine. An LD motif 3 motif is present at residues 157 to 168; the sequence is ELDRLMASLSDF. The interval 172 to 205 is disordered; the sequence is NHLPASGPTQPPVVSSTNEGSPSPPEPTGKGSLD. A compositionally biased stretch (polar residues) spans 183–192; it reads PVVSSTNEGS. A Phosphothreonine modification is found at T188. Phosphoserine is present on residues S192 and S194. Positions 203–215 match the LD motif 4 motif; sequence SLDTMLGLLQSDL. LIM zinc-binding domains follow at residues 226–285, 286–343, 344–403, and 404–461; these read GLCG…RFSP, RCGF…QLFA, PRCQ…RRGS, and LCAT…KLFG. The residue at position 403 (S403) is a Phosphoserine. The residue at position 407 (T407) is a Phosphothreonine.

Belongs to the paxillin family. Homooligomer. Interacts with PPARG. Interacts with TRAF4. Interacts with CRIP2. Interacts with HSPB1. Interacts with ILK. Interacts with LIMS1 and LIMS2. Interacts with NCK2. Interacts with NUDT16L1. Interacts with PAK. Interacts with PTPN12. Interacts with TCF3. Interacts with TCF7L2. Interacts with VCL. Interacts (via LD motif 3) with GIT1. Also interacts with GIT2. Forms a complex with ARHGEF7. Interacts with AR/androgen receptor in a ligand-dependent manner. Interacts with CSK. Interacts with PTK2/FAK1 and PTK2B/PYK2. Interacts with SLC6A3 and SLC6A4. Interacts with NR3C1. Interacts with SMAD3. Interacts with MAPK15. Interacts with SRC. Interacts with LYN. Interacts with talin. Interacts (via LIM zinc-binding domain 2) with CBLC (via RING-type zinc finger); the interaction is direct and enhances CBLC E3 ubiquitin-protein ligase activity. Interacts with PARVA. Interacts with PXN. In terms of processing, phosphorylated by gonadotropin-releasing hormone-activated SRC. As to expression, expressed in platelets, smooth muscle and prostate stromal cells (at protein level).

The protein resides in the cell junction. It is found in the focal adhesion. The protein localises to the nucleus matrix. It localises to the cytoplasm. Its subcellular location is the cytoskeleton. Its function is as follows. Functions as a molecular adapter coordinating multiple protein-protein interactions at the focal adhesion complex and in the nucleus. Links various intracellular signaling modules to plasma membrane receptors and regulates the Wnt and TGFB signaling pathways. May also regulate SLC6A3 and SLC6A4 targeting to the plasma membrane hence regulating their activity. In the nucleus, functions as a nuclear receptor coactivator regulating glucocorticoid, androgen, mineralocorticoid and progesterone receptor transcriptional activity. May play a role in the processes of cell growth, proliferation, migration, differentiation and senescence. May have a zinc-dependent DNA-binding activity. The protein is Transforming growth factor beta-1-induced transcript 1 protein (TGFB1I1) of Homo sapiens (Human).